The sequence spans 464 residues: Arginine biosynthesis bifunctional protein ArgJ, chloroplastic (464 aa).

6 residues coordinate substrate: T208, K234, T245, E332, N459, and T464. T245 serves as the catalytic Nucleophile.

The protein belongs to the ArgJ family. Heterodimer of an alpha and a beta chain.

It is found in the plastid. It localises to the chloroplast. The catalysed reaction is N(2)-acetyl-L-ornithine + L-glutamate = N-acetyl-L-glutamate + L-ornithine. It catalyses the reaction L-glutamate + acetyl-CoA = N-acetyl-L-glutamate + CoA + H(+). It participates in amino-acid biosynthesis; L-arginine biosynthesis; L-ornithine and N-acetyl-L-glutamate from L-glutamate and N(2)-acetyl-L-ornithine (cyclic): step 1/1. Its pathway is amino-acid biosynthesis; L-arginine biosynthesis; N(2)-acetyl-L-ornithine from L-glutamate: step 1/4. Catalyzes two activities which are involved in the cyclic version of arginine biosynthesis: the synthesis of acetylglutamate from glutamate and acetyl-CoA, and of ornithine by transacetylation between acetylornithine and glutamate. This chain is Arginine biosynthesis bifunctional protein ArgJ, chloroplastic, found in Sorghum bicolor (Sorghum).